The chain runs to 415 residues: ORC1-type DNA replication protein 2 (415 aa).

ATP is bound by residues 69 to 73 (TGKSV), tyrosine 215, and arginine 227.

It belongs to the CDC6/cdc18 family.

Functionally, involved in regulation of DNA replication. The protein is ORC1-type DNA replication protein 2 (cdc6-2) of Sulfolobus acidocaldarius (strain ATCC 33909 / DSM 639 / JCM 8929 / NBRC 15157 / NCIMB 11770).